A 407-amino-acid polypeptide reads, in one-letter code: Transmembrane protein 184B (407 aa).

The segment at 1–25 (MTVRGDVLAPDPASPTTAAASPSVS) is disordered. Low complexity predominate over residues 9 to 25 (APDPASPTTAAASPSVS). 7 helical membrane passes run 40 to 60 (FLMT…ALLI), 84 to 104 (ILFI…FFTN), 121 to 141 (LVIY…SSIM), 178 to 198 (LQFC…QAFG), 214 to 234 (VTII…LFYF), 249 to 269 (FFMV…LAIL), and 290 to 310 (VAAG…ALAL). The segment at 369 to 395 (TLEPGPTWRGGAHGLSRSHSLSGARDN) is disordered. A phosphoserine mark is found at Ser388, Ser402, and Ser403.

This sequence belongs to the TMEM184 family.

It is found in the membrane. Functionally, may activate the MAP kinase signaling pathway. This Homo sapiens (Human) protein is Transmembrane protein 184B (TMEM184B).